We begin with the raw amino-acid sequence, 357 residues long: COP9 signalosome complex subunit 5a (357 aa).

Met-1 is subject to N-acetylmethionine. An MPN domain is found at 59–196; the sequence is VHISALALLK…IGAFRTYPEG (138 aa). Zn(2+)-binding residues include His-142, His-144, and Asp-155. The JAMM motif signature appears at 142–155; it reads HSHPGYGCWLSGID. Residues 338 to 357 are disordered; the sequence is ARQSKKSADDSSDPEPMITS.

Belongs to the peptidase M67A family. CSN5 subfamily. In terms of assembly, component of the CSN complex, probably composed of CSN1, CSN2, CSN3, CSN4, CSN5 (CSN5A or CSN5B), CSN6 (CSN6A or CSN6B), CSN7 and CSN8. CSN5A or CSN5B are present within distinct CSN complexes each containing only one copy of CSN5. Interacts with itself. In the complex, it is located in the center and probably interacts directly with CSN4 and CSN6A or CSN6B. Present also in subcomplex forms which inculdes CSN3. Also exists as monomeric form. Interacts with CYT1 in vitro, but not in planta. A divalent metal cation is required as a cofactor. As to expression, ubiquitously expressed. Highly expressed in flowers and roots. Expressed at lower level in seedlings and siliques.

The protein localises to the cytoplasm. It is found in the nucleus. Functionally, probable protease subunit of the COP9 signalosome complex (CSN), a complex involved in various cellular and developmental processes such as photomorphogenesis and auxin and jasmonate responses. The CSN complex is an essential regulator of the ubiquitin (Ubl) conjugation pathway by mediating the deneddylation of the cullin subunits of the SCF-type E3 ligase complexes, leading to decrease the Ubl ligase activity of SCF. In the complex, it probably acts as the catalytic center that mediates the cleavage of Nedd8 from cullins. It however has no metalloprotease activity by itself and requires the other subunits of the CSN complex. The CSN complex is involved in repression of photomorphogenesis in darkness by regulating the activity of COP1-containing Ubl ligase complexes. The complex is also required for degradation of PSIAA6 by regulating the activity of the Ubl ligase SCF-TIR complex. Involved in CSN's deneddylation/derubylation activity. Required for the deneddylation of all cullins. Essential for the structural integrity of the CSN holocomplex. This is COP9 signalosome complex subunit 5a from Arabidopsis thaliana (Mouse-ear cress).